Reading from the N-terminus, the 263-residue chain is Transcription factor bHLH27 (263 aa).

Over residues 32–47 the composition is skewed to low complexity; that stretch reads EAFSGSGESSSPDGAA. The disordered stretch occupies residues 32–61; the sequence is EAFSGSGESSSPDGAATSPASSKNVVSERN. Polar residues predominate over residues 49 to 58; it reads SPASSKNVVS. The bHLH domain occupies 50–99; the sequence is PASSKNVVSERNRRQKLNQRLFALRSVVPNISKLDKASVIKDSIDYMQEL.

Homodimer. Expressed constitutively in roots, leaves, stems, and flowers.

It localises to the nucleus. This Arabidopsis thaliana (Mouse-ear cress) protein is Transcription factor bHLH27 (BHLH27).